The following is a 232-amino-acid chain: uncharacterized protein (232 aa).

This is an uncharacterized protein from Acanthamoeba polyphaga (Amoeba).